Here is a 72-residue protein sequence, read N- to C-terminus: Bowman-Birk type proteinase inhibitor (72 aa).

Disulfide bonds link cysteine 8-cysteine 61, cysteine 9-cysteine 24, cysteine 12-cysteine 57, cysteine 14-cysteine 22, cysteine 31-cysteine 38, cysteine 35-cysteine 50, and cysteine 40-cysteine 48.

This sequence belongs to the Bowman-Birk serine protease inhibitor family.

Functionally, this inhibitor has two domains, each with separate antiprotease activity. 1 mole of inhibitor inhibits either 1 mole of trypsin or 2 moles of chymotrypsin, stoichiometrically. The sequence is that of Bowman-Birk type proteinase inhibitor from Vicia sativa subsp. nigra (Common vetch).